The chain runs to 456 residues: Protein shifted (456 aa).

Residues 1 to 30 (MTHQGIGCLVKWLYLVLIVHTLLCIGQLEC) form the signal peptide. The tract at residues 34–112 (HHNRNNNNNN…GGGGSRHNRN (79 aa)) is disordered. Over residues 44-55 (RRADSSSSEEGH) the composition is skewed to basic and acidic residues. Asparagine 57 carries N-linked (GlcNAc...) asparagine glycosylation. Over residues 77–87 (HQPRRGQRKKQ) the composition is skewed to basic residues. Gly residues predominate over residues 88 to 107 (QGGGGGGSGGGGGNGGGGGS). The 143-residue stretch at 119 to 261 (LWINEQQLKM…PIRLNFKKEC (143 aa)) folds into the WIF domain. 3 N-linked (GlcNAc...) asparagine glycosylation sites follow: asparagine 173, asparagine 217, and asparagine 227. 16 disulfides stabilise this stretch: cysteine 224-cysteine 261, cysteine 283-cysteine 293, cysteine 287-cysteine 299, cysteine 301-cysteine 310, cysteine 315-cysteine 325, cysteine 319-cysteine 331, cysteine 333-cysteine 342, cysteine 347-cysteine 357, cysteine 351-cysteine 363, cysteine 365-cysteine 374, cysteine 379-cysteine 389, cysteine 383-cysteine 395, cysteine 397-cysteine 406, cysteine 416-cysteine 423, cysteine 418-cysteine 429, and cysteine 431-cysteine 440. 5 EGF-like domains span residues 279–311 (TLQECSLKCGKNGYCNEHHICKCNVGYTGQYCE), 315–342 (CFPQCLNGGNCTAPSVCTCPEGYQGTQC), 343–375 (EGGICKDKCLNGGKCIQKDKCQCSKGYYGLRCE), 376–407 (YSKCVIPCKNEGRCIGNNLCRCPNGLRGDHCE), and 412–441 (QRSICKCRNGTCVSHKHCKCHPGFYGRHCN). N-linked (GlcNAc...) asparagine glycosylation is present at asparagine 324. Residue asparagine 420 is glycosylated (N-linked (GlcNAc...) asparagine).

In terms of assembly, interacts with hh. In terms of tissue distribution, at the blastoderm stage, it is ubiquitously expressed. As embryogenesis continues, it is expressed in the epidermis and central nervous system, this expression being segmentally modulated. Also highly expressed at the foregut and hindgut throughout embryogenesis. In third instar wing imaginal disks, it is highly expressed in the most anterior and posterior parts of the disk and weakly expressed at the antero/posterior (A/P) compartment border. In the leg disks and the antenna part of the eye-antennal imaginal disk it is also weakly expressed at the A/P compartment border. Weakly expressed in the morphogenetic furrow in the eye primordium.

The protein resides in the secreted. It localises to the extracellular space. It is found in the extracellular matrix. Required for normal accumulation and movement of lipid-modified hedgehog (hh) morphogen. May act by stabilizing the interaction between heparan sulfate proteoglycans (HSPGs) and hh, HSPGs being required for diffusion of hh morphogen. Not involved in wingless (wg) morphogen movement, suggesting that it may provide HSPG specificity for Hh. This is Protein shifted (shf) from Drosophila melanogaster (Fruit fly).